Consider the following 535-residue polypeptide: T-complex protein 1 subunit zeta (535 aa).

Belongs to the TCP-1 chaperonin family. In terms of assembly, heterooligomeric complex of about 850 to 900 kDa that forms two stacked rings, 12 to 16 nm in diameter.

It is found in the cytoplasm. In terms of biological role, molecular chaperone; assists the folding of proteins upon ATP hydrolysis. Known to play a role, in vitro, in the folding of actin and tubulin. The chain is T-complex protein 1 subunit zeta (cct6) from Schizosaccharomyces pombe (strain 972 / ATCC 24843) (Fission yeast).